A 595-amino-acid chain; its full sequence is Fructan 1-exohydrolase (595 aa).

The first 20 residues, 1–20 (MAQAWAFLLPLLVLGSYVTS), serve as a signal peptide directing secretion. Aspartate 74 is a catalytic residue. N-linked (GlcNAc...) asparagine glycosylation is found at asparagine 167, asparagine 235, and asparagine 247. A disulfide bridge links cysteine 445 with cysteine 491. The N-linked (GlcNAc...) asparagine glycan is linked to asparagine 566.

This sequence belongs to the glycosyl hydrolase 32 family.

The enzyme catalyses Hydrolysis of terminal, non-reducing (2-&gt;1)-linked beta-D-fructofuranose residues in fructans.. Inhibited by sucrose. Its function is as follows. Hydrolyzes inulin-type beta-(2,1)-fructans. May play a role as a beta-(2,1)-trimmer during graminan biosynthesis. In Aegilops speltoides (Goatgrass), this protein is Fructan 1-exohydrolase.